The primary structure comprises 173 residues: MKKNRLLFRVIILLILSGAVGFTLYQGYFSKEEKMEIGKEAPNFVVTDLEGKKIELKDFKGKGVFLNFWGTWCKPCEKEMPYMNELYPKYKEKGVEIIALDADETDIAVKNFVKQYDLKFPVAIDKGGEIIKTYGVIPLPTSFLIDKDGKVIQEIKGEQTKEQLEEYLKKITP.

The helical; Signal-anchor for type II membrane protein transmembrane segment at 10–29 threads the bilayer; it reads VIILLILSGAVGFTLYQGYF. Positions 35-173 constitute a Thioredoxin domain; that stretch reads MEIGKEAPNF…LEEYLKKITP (139 aa). A disulfide bridge links C73 with C76.

Belongs to the thioredoxin family. ResA subfamily.

It is found in the cell membrane. It functions in the pathway protein modification; cytochrome c assembly. Functionally, thiol-disulfide oxidoreductase which is required in disulfide reduction during c-type cytochrome synthesis. May accept reducing equivalents from CcdA, leading to breakage of disulfide bonds in apocytochrome c; following this reduction heme can be covalently attached. In Bacillus cereus (strain ATCC 10987 / NRS 248), this protein is Thiol-disulfide oxidoreductase ResA.